A 72-amino-acid chain; its full sequence is Large ribosomal subunit protein bL31 (72 aa).

Zn(2+) is bound by residues cysteine 16, cysteine 18, cysteine 37, and cysteine 40.

Belongs to the bacterial ribosomal protein bL31 family. Type A subfamily. In terms of assembly, part of the 50S ribosomal subunit. The cofactor is Zn(2+).

In terms of biological role, binds the 23S rRNA. The polypeptide is Large ribosomal subunit protein bL31 (Buchnera aphidicola subsp. Acyrthosiphon pisum (strain APS) (Acyrthosiphon pisum symbiotic bacterium)).